The primary structure comprises 509 residues: Probable triacylglyceride transporter ML0556 (509 aa).

13 helical membrane passes run 48-68 (RITW…PLLS), 78-98 (LLLQ…ALAG), 112-132 (IQGV…ADLW), 146-166 (AAQE…VWLF), 171-191 (YVFW…QVSL), 203-223 (VDVV…IGLY), 232-252 (VLPS…VAFA), 272-292 (PFLS…VTLV), 309-329 (AAGL…LGGW), 339-359 (MTFV…HWPV), 381-403 (LLVA…LRVV), 410-430 (IASA…VAAL), and 477-497 (IFMI…LISS).

It belongs to the major facilitator superfamily.

It localises to the cell inner membrane. Its function is as follows. In association with lipoprotein LprG probably transports triacylglycerides (TAG) across the inner cell membrane into the periplasm; TAG probably regulates lipid metabolism and growth regulation. May be an efflux transporter and involved in maintaining correct cell wall permeability. Probably required with LprG for normal surface localization of lipoarabinomannan (LAM). This is Probable triacylglyceride transporter ML0556 from Mycobacterium leprae (strain TN).